Consider the following 482-residue polypeptide: Cysteine--tRNA ligase (482 aa).

C29 contributes to the Zn(2+) binding site. Positions 31–41 (PTVYDSAHVGH) match the 'HIGH' region motif. Zn(2+) is bound by residues C210, H235, and E239. The 'KMSKS' region signature appears at 272 to 276 (KMSKS). K275 serves as a coordination point for ATP.

Belongs to the class-I aminoacyl-tRNA synthetase family. In terms of assembly, monomer. The cofactor is Zn(2+).

It localises to the cytoplasm. It catalyses the reaction tRNA(Cys) + L-cysteine + ATP = L-cysteinyl-tRNA(Cys) + AMP + diphosphate. This Anaeromyxobacter sp. (strain Fw109-5) protein is Cysteine--tRNA ligase.